The chain runs to 56 residues: Large ribosomal subunit protein bL33 (56 aa).

A compositionally biased stretch (basic and acidic residues) spans 1–12; sequence MASKGGRDKIKL. The tract at residues 1–30 is disordered; that stretch reads MASKGGRDKIKLESTAGTGHFYTTTKNKRT. The segment covering 15–25 has biased composition (polar residues); the sequence is TAGTGHFYTTT.

This sequence belongs to the bacterial ribosomal protein bL33 family.

The sequence is that of Large ribosomal subunit protein bL33 from Ralstonia nicotianae (strain ATCC BAA-1114 / GMI1000) (Ralstonia solanacearum).